Here is a 229-residue protein sequence, read N- to C-terminus: MPKRKALTPFPYLASIVFLPWGISLSFNKSLESWVINWWNTRQSETFLNDIQEKKVLERFIELEELFLLDEMIKEYSGTHIQKLRIGIYKETIQLVRMHNQDHIHLILHFSTNIICFTILSAYSILGNEELVILNSWVQEFLYNLSDTIKAFSILLLTDLCIGFHSPHGWELMIGLVYQNFGFAHNEQVISGLVSTFPVIIDTILKYWIFLFLNRVSPSLVVIYHSMNE.

3 consecutive transmembrane segments (helical) span residues 7–27 (LTPF…SLSF), 106–126 (LILH…YSIL), and 193–213 (LVST…FLFL).

It belongs to the CemA family.

Its subcellular location is the plastid. The protein resides in the chloroplast inner membrane. The catalysed reaction is K(+)(in) + H(+)(out) = K(+)(out) + H(+)(in). Contributes to K(+)/H(+) antiport activity by supporting proton efflux to control proton extrusion and homeostasis in chloroplasts in a light-dependent manner to modulate photosynthesis. Prevents excessive induction of non-photochemical quenching (NPQ) under continuous-light conditions. Indirectly promotes efficient inorganic carbon uptake into chloroplasts. The polypeptide is Potassium/proton antiporter CemA (Illicium oligandrum (Star anise)).